The chain runs to 163 residues: Putative MucR family transcriptional regulatory protein RA0938 (163 aa).

Belongs to the ros/MucR family.

The sequence is that of Putative MucR family transcriptional regulatory protein RA0938 from Rhizobium meliloti (strain 1021) (Ensifer meliloti).